Reading from the N-terminus, the 245-residue chain is Lactate utilization protein A 1 (245 aa).

Belongs to the LutA/YkgE family.

In terms of biological role, is involved in L-lactate degradation and allows cells to grow with lactate as the sole carbon source. The protein is Lactate utilization protein A 1 of Bacillus mycoides (strain KBAB4) (Bacillus weihenstephanensis).